Reading from the N-terminus, the 126-residue chain is Large ribosomal subunit protein bL20c (126 aa).

It belongs to the bacterial ribosomal protein bL20 family.

It is found in the plastid. It localises to the chloroplast. Binds directly to 23S ribosomal RNA and is necessary for the in vitro assembly process of the 50S ribosomal subunit. It is not involved in the protein synthesizing functions of that subunit. The chain is Large ribosomal subunit protein bL20c from Illicium oligandrum (Star anise).